A 622-amino-acid polypeptide reads, in one-letter code: Chaperone protein HscA homolog (622 aa).

It belongs to the heat shock protein 70 family.

In terms of biological role, chaperone involved in the maturation of iron-sulfur cluster-containing proteins. Has a low intrinsic ATPase activity which is markedly stimulated by HscB. This Burkholderia mallei (strain NCTC 10247) protein is Chaperone protein HscA homolog.